Consider the following 211-residue polypeptide: Pyridoxine/pyridoxamine 5'-phosphate oxidase (211 aa).

Residues 8–11 (RNEY) and Lys66 each bind substrate. FMN is bound by residues 61–66 (RVVLLK), 76–77 (FT), Lys83, and Gln105. Residues Tyr123, Arg127, and Ser131 each coordinate substrate. FMN-binding positions include 140–141 (QS) and Trp184. 190-192 (RLH) is a substrate binding site. Arg194 contributes to the FMN binding site.

The protein belongs to the pyridoxamine 5'-phosphate oxidase family. In terms of assembly, homodimer. The cofactor is FMN.

The catalysed reaction is pyridoxamine 5'-phosphate + O2 + H2O = pyridoxal 5'-phosphate + H2O2 + NH4(+). It catalyses the reaction pyridoxine 5'-phosphate + O2 = pyridoxal 5'-phosphate + H2O2. It functions in the pathway cofactor metabolism; pyridoxal 5'-phosphate salvage; pyridoxal 5'-phosphate from pyridoxamine 5'-phosphate: step 1/1. The protein operates within cofactor metabolism; pyridoxal 5'-phosphate salvage; pyridoxal 5'-phosphate from pyridoxine 5'-phosphate: step 1/1. Functionally, catalyzes the oxidation of either pyridoxine 5'-phosphate (PNP) or pyridoxamine 5'-phosphate (PMP) into pyridoxal 5'-phosphate (PLP). This chain is Pyridoxine/pyridoxamine 5'-phosphate oxidase, found in Mannheimia succiniciproducens (strain KCTC 0769BP / MBEL55E).